The primary structure comprises 208 residues: Uracil phosphoribosyltransferase (208 aa).

Residues Arg78, Arg103, and 130–138 (DPMLAIGGS) each bind 5-phospho-alpha-D-ribose 1-diphosphate. Uracil-binding positions include Ile193 and 198-200 (GDA). Residue Asp199 participates in 5-phospho-alpha-D-ribose 1-diphosphate binding.

It belongs to the UPRTase family. Mg(2+) serves as cofactor.

It carries out the reaction UMP + diphosphate = 5-phospho-alpha-D-ribose 1-diphosphate + uracil. Its pathway is pyrimidine metabolism; UMP biosynthesis via salvage pathway; UMP from uracil: step 1/1. Its activity is regulated as follows. Allosterically activated by GTP. Functionally, catalyzes the conversion of uracil and 5-phospho-alpha-D-ribose 1-diphosphate (PRPP) to UMP and diphosphate. The protein is Uracil phosphoribosyltransferase of Vibrio cholerae serotype O1 (strain ATCC 39315 / El Tor Inaba N16961).